Consider the following 121-residue polypeptide: Large ribosomal subunit protein bL12 (121 aa).

The protein belongs to the bacterial ribosomal protein bL12 family. As to quaternary structure, homodimer. Part of the ribosomal stalk of the 50S ribosomal subunit. Forms a multimeric L10(L12)X complex, where L10 forms an elongated spine to which 2 to 4 L12 dimers bind in a sequential fashion. Binds GTP-bound translation factors.

Its function is as follows. Forms part of the ribosomal stalk which helps the ribosome interact with GTP-bound translation factors. Is thus essential for accurate translation. This Lactococcus lactis subsp. cremoris (strain MG1363) protein is Large ribosomal subunit protein bL12.